A 113-amino-acid polypeptide reads, in one-letter code: Hydrogenase maturation factor HypA (113 aa).

His2 contributes to the Ni(2+) binding site. The Zn(2+) site is built by Cys73, Cys76, Cys89, and Cys92.

This sequence belongs to the HypA/HybF family.

Its function is as follows. Involved in the maturation of [NiFe] hydrogenases. Required for nickel insertion into the metal center of the hydrogenase. This is Hydrogenase maturation factor HypA from Legionella pneumophila (strain Paris).